A 242-amino-acid polypeptide reads, in one-letter code: Neuromodulin (242 aa).

Positions 1-242 (MLCCMRRTKQ…EEREADQEHA (242 aa)) are disordered. Residues Cys3 and Cys4 are each lipidated (S-palmitoyl cysteine). Positions 9-32 (KQVEKNDEDQKIEQDGIKPEDKAH) are enriched in basic and acidic residues. An IQ domain is found at 31–60 (AHKAATKIQASFRGHITRKKLKGEKKGDAQ). Residue Ser41 is modified to Phosphoserine; by PHK and PKC. Composition is skewed to basic and acidic residues over residues 66-84 (GNEK…KEGE) and 98-117 (KAEE…KGEG). A compositionally biased stretch (polar residues) spans 142–157 (ETESATKASTDNSPSS). A phosphoserine mark is found at Ser154, Ser156, and Ser157. Basic and acidic residues predominate over residues 158 to 170 (KAEDAPAKEEPKQ). The span at 171–203 (ADVPAAVTAAAAATTPAAEDAAAKATAQPPTDA) shows a compositional bias: low complexity. Thr185 bears the Phosphothreonine mark. Ser206 and Ser207 each carry phosphoserine; by CK2. Basic and acidic residues predominate over residues 209–242 (AEEKIEAVDETKPKESARQDEGKGEEREADQEHA).

It belongs to the neuromodulin family. In terms of assembly, identified in a complex containing FGFR4, NCAM1, CDH2, PLCG1, FRS2, SRC, SHC1, GAP43 and CTTN. Interacts (via IQ domain) with calmodulin. Binds calmodulin with a greater affinity in the absence of Ca(2+) than in its presence. In terms of processing, phosphorylated. Phosphorylation of this protein by a protein kinase C is specifically correlated with certain forms of synaptic plasticity. Post-translationally, palmitoylated by ZDHHC3. Palmitoylation is regulated by ARF6 and is essential for plasma membrane association and axonal and dendritic filopodia induction. Deacylated by LYPLA2.

Its subcellular location is the cell membrane. The protein localises to the cell projection. It is found in the growth cone membrane. It localises to the synapse. The protein resides in the filopodium membrane. Its subcellular location is the perikaryon. The protein localises to the dendrite. It is found in the axon. It localises to the cytoplasm. Its function is as follows. This protein is associated with nerve growth. It is a major component of the motile 'growth cones' that form the tips of elongating axons. Plays a role in axonal and dendritic filopodia induction. The protein is Neuromodulin (GAP43) of Felis catus (Cat).